A 326-amino-acid polypeptide reads, in one-letter code: DNA-directed RNA polymerase subunit alpha (326 aa).

The tract at residues 1-230 (MLKIEKQAKA…LHLDPFLEIG (230 aa)) is alpha N-terminal domain (alpha-NTD). Residues 249-326 (DIQVIDDKSH…YDLEKNGSPE (78 aa)) are alpha C-terminal domain (alpha-CTD).

Belongs to the RNA polymerase alpha chain family. In terms of assembly, homodimer. The RNAP catalytic core consists of 2 alpha, 1 beta, 1 beta' and 1 omega subunit. When a sigma factor is associated with the core the holoenzyme is formed, which can initiate transcription.

The enzyme catalyses RNA(n) + a ribonucleoside 5'-triphosphate = RNA(n+1) + diphosphate. Functionally, DNA-dependent RNA polymerase catalyzes the transcription of DNA into RNA using the four ribonucleoside triphosphates as substrates. The chain is DNA-directed RNA polymerase subunit alpha from Fusobacterium nucleatum subsp. nucleatum (strain ATCC 25586 / DSM 15643 / BCRC 10681 / CIP 101130 / JCM 8532 / KCTC 2640 / LMG 13131 / VPI 4355).